The primary structure comprises 105 residues: U-scoloptoxin(10)-Sm3a (105 aa).

The signal sequence occupies residues 1–23; it reads MYKFIFIFFTVFFLINIIEESXT.

This sequence belongs to the scoloptoxin-10 family. In terms of processing, contains 3 disulfide bonds. Expressed by the venom gland.

The protein resides in the secreted. This Scolopendra morsitans (Tanzanian blue ringleg centipede) protein is U-scoloptoxin(10)-Sm3a.